The sequence spans 1041 residues: Protein SMAX1-like (1041 aa).

A Clp R domain is found at 8–188 (IQQTLTPEAA…KSIIEQSLSA (181 aa)). Repeat stretches follow at residues 12–98 (LTPE…LDRL) and 117–188 (VSNA…SLSA). Residues 189-205 (PSPCPSAAASTTTAGPG) are compositionally biased toward low complexity. Disordered regions lie at residues 189–214 (PSPC…PSPL), 482–513 (EAEQ…QNKA), and 889–913 (EGSH…VKRS). Positions 482 to 495 (EAEQTDKPASRPEA) are enriched in basic and acidic residues. Residues 891 to 900 (SHNSSDVSVE) are compositionally biased toward polar residues.

The protein belongs to the ClpA/ClpB family.

May act downstream of MAX2 to negatively regulate karrikins/strigolactone responses. Acts probably specifically in the karrikin pathway. May function in a transcriptional corepressor complex. This chain is Protein SMAX1-like, found in Oryza sativa subsp. japonica (Rice).